The following is a 195-amino-acid chain: Porimin (195 aa).

The first 23 residues, 1–23, serve as a signal peptide directing secretion; that stretch reads MALCARAALLLGVLQVLALLGAA. Residues 24–152 lie on the Extracellular side of the membrane; sequence QDPTDAQGSA…PTKGKGSKFD (129 aa). N-linked (GlcNAc...) asparagine glycans are attached at residues asparagine 36, asparagine 45, asparagine 51, asparagine 59, asparagine 109, and asparagine 115. Residues 99 to 127 are disordered; the sequence is VTPTASKSTPNASASPNSTHTSASMTTPA. Residues 101 to 126 show a composition bias toward polar residues; it reads PTASKSTPNASASPNSTHTSASMTTP. Residues 153-173 form a helical membrane-spanning segment; sequence AGSFVGGIVLTLGVLSILYIG. Residues 174-195 are Cytoplasmic-facing; sequence CKMYYSRRGIRYRSIDEHDAII. Position 187 is a phosphoserine (serine 187).

This sequence belongs to the CD164 family.

It is found in the membrane. Functionally, implicated in oncotic cell death, characterized by cell swelling, organelle swelling, vacuolization and increased membrane permeability. This chain is Porimin (Tmem123), found in Mus musculus (Mouse).